A 152-amino-acid chain; its full sequence is Anaerobic nitrite reductase HBI (152 aa).

Residues 2 to 151 form the Globin domain; it reads ALTEKQEALL…LVATIKAEMK (150 aa). The Homodimerization motif lies at 35–39; sequence EAAPE. 5 residues coordinate heme b: Ser45, Lys59, His63, Arg93, and His98. The Homodimerization motif lies at 105–117; sequence DPHFEVMKGALLG.

This sequence belongs to the plant globin family. Homodimer. It depends on heme b as a cofactor. As to expression, root nodules.

The protein localises to the cytoplasm. It is found in the nucleus. It carries out the reaction Fe(III)-heme b-[protein] + nitric oxide + H2O = Fe(II)-heme b-[protein] + nitrite + 2 H(+). Functionally, phytoglobin that reduces nitrite to nitric oxide (NO) under anoxic conditions (e.g. during flooding or in waterlogged soil) and upon root nodulation. Required for general plant development and during nodulation, especially for the onset of symbiosis. Monitors nitric oxide (NO) levels during early phase of the nitrogen-fixing symbiosis and buffers oxygen in functioning nodules. May not function as an oxygen storage or transport protein. Has an unusually high affinity for O(2) through a hexacoordinate heme iron because of a very low dissociation constant. The protein is Anaerobic nitrite reductase HBI of Casuarina glauca (Swamp oak).